The chain runs to 287 residues: Heterodimeric geranylgeranyl pyrophosphate synthase small subunit 2, chloroplastic (287 aa).

Mg(2+)-binding residues include E103 and D109. 3 residues coordinate dimethylallyl diphosphate: K204, Q241, and K250.

It belongs to the FPP/GGPP synthase family. As to quaternary structure, part of a heterodimeric geranyl(geranyl)diphosphate synthase. Mg(2+) is required as a cofactor. As to expression, mainly expressed in trichomes, and, to a lower extent, in roots, leaves, flowers and stems.

Its subcellular location is the plastid. It localises to the chloroplast thylakoid membrane. Its function is as follows. Heterodimeric geranyl(geranyl)-diphosphate (GPP) synthase small subunit. The small subunit alone is inactive in vitro while the large subunit GGPPS1 catalyzes mainly the production of geranygeranyl-diphosphate in vitro. Upon association of the two subunits, the product profile changes and the production of gerany-diphosphate is strongly increased. The sequence is that of Heterodimeric geranylgeranyl pyrophosphate synthase small subunit 2, chloroplastic from Cannabis sativa (Hemp).